Reading from the N-terminus, the 235-residue chain is Large ribosomal subunit protein uL1 (235 aa).

The protein belongs to the universal ribosomal protein uL1 family. As to quaternary structure, part of the 50S ribosomal subunit.

Binds directly to 23S rRNA. The L1 stalk is quite mobile in the ribosome, and is involved in E site tRNA release. Functionally, protein L1 is also a translational repressor protein, it controls the translation of the L11 operon by binding to its mRNA. The polypeptide is Large ribosomal subunit protein uL1 (Micrococcus luteus (strain ATCC 4698 / DSM 20030 / JCM 1464 / CCM 169 / CCUG 5858 / IAM 1056 / NBRC 3333 / NCIMB 9278 / NCTC 2665 / VKM Ac-2230) (Micrococcus lysodeikticus)).